Reading from the N-terminus, the 138-residue chain is ATP synthase epsilon chain (138 aa).

Belongs to the ATPase epsilon chain family. As to quaternary structure, F-type ATPases have 2 components, CF(1) - the catalytic core - and CF(0) - the membrane proton channel. CF(1) has five subunits: alpha(3), beta(3), gamma(1), delta(1), epsilon(1). CF(0) has three main subunits: a, b and c.

It localises to the cell membrane. Functionally, produces ATP from ADP in the presence of a proton gradient across the membrane. The sequence is that of ATP synthase epsilon chain from Streptococcus gordonii (strain Challis / ATCC 35105 / BCRC 15272 / CH1 / DL1 / V288).